Consider the following 61-residue polypeptide: Small ribosomal subunit protein uS14 (61 aa).

Cysteine 24, cysteine 27, cysteine 40, and cysteine 43 together coordinate Zn(2+).

This sequence belongs to the universal ribosomal protein uS14 family. Zinc-binding uS14 subfamily. In terms of assembly, part of the 30S ribosomal subunit. Contacts proteins S3 and S10. Requires Zn(2+) as cofactor.

Binds 16S rRNA, required for the assembly of 30S particles and may also be responsible for determining the conformation of the 16S rRNA at the A site. This Desulfitobacterium hafniense (strain Y51) protein is Small ribosomal subunit protein uS14.